The following is a 435-amino-acid chain: MAAQTTEKLQKLDLNGQSGDAKADAPAAGQAEAGEAEEDSDDEKDDGNAAPEAGAGGAAKKKKRKSKKKKKGGAKVQSSPPRVPVSNLFPNNQYPEGEIVEYTNENSYRTTNEEKRYLDRMNNDFLQEYRQAAEVHRQVRQYAQKNIKPGQTLTEIAEGIEDAVRALTGHQGLEEGDNLKGGMGFPCGLSINHCAAHYTPNAGNKMVLQQGDVMKVDFGAQINGRIVDSAFTMTFDPVYDPLLEAVKDATNTGIREAGIDVRMSDIGAAIQEAMESYEIELNGTMYPVKCIRNLNGHNIDQHVIHGGKSVPIVKGGDQTKMEEGETFAIETFGSTGKGYVREDMETSHYALVPDAPSVPLRLSSAKNLLNVINKNFGTLPFCRRYLDRLGQDKYLLGLNNLVSSGIVQDYPPLCDIKGSYTAQFEHVQIPSHSHP.

The interval 1-92 (MAAQTTEKLQ…VPVSNLFPNN (92 aa)) is disordered. A compositionally biased stretch (low complexity) spans 24 to 33 (DAPAAGQAEA). Over residues 34-45 (GEAEEDSDDEKD) the composition is skewed to acidic residues. The segment covering 59-73 (AKKKKRKSKKKKKGG) has biased composition (basic residues). Residue H197 participates in substrate binding. A divalent metal cation is bound by residues D217, D228, and H297. H305 is a substrate binding site. A divalent metal cation contacts are provided by E330 and E425.

It belongs to the peptidase M24A family. Methionine aminopeptidase eukaryotic type 2 subfamily. Requires Co(2+) as cofactor. Zn(2+) is required as a cofactor. Mn(2+) serves as cofactor. The cofactor is Fe(2+).

It is found in the cytoplasm. It catalyses the reaction Release of N-terminal amino acids, preferentially methionine, from peptides and arylamides.. In terms of biological role, cotranslationally removes the N-terminal methionine from nascent proteins. The N-terminal methionine is often cleaved when the second residue in the primary sequence is small and uncharged (Met-Ala-, Cys, Gly, Pro, Ser, Thr, or Val). This Aspergillus clavatus (strain ATCC 1007 / CBS 513.65 / DSM 816 / NCTC 3887 / NRRL 1 / QM 1276 / 107) protein is Methionine aminopeptidase 2-2.